The primary structure comprises 280 residues: Fructose-1,6-bisphosphatase class 1 (280 aa).

Positions 64, 83, 85, and 86 each coordinate Mg(2+). Residues 86–89 (DGSS), Y189, and K220 contribute to the substrate site. E226 provides a ligand contact to Mg(2+).

The protein belongs to the FBPase class 1 family. Homotetramer. It depends on Mg(2+) as a cofactor.

It is found in the cytoplasm. The catalysed reaction is beta-D-fructose 1,6-bisphosphate + H2O = beta-D-fructose 6-phosphate + phosphate. It participates in carbohydrate biosynthesis; gluconeogenesis. This is Fructose-1,6-bisphosphatase class 1 from Campylobacter jejuni subsp. jejuni serotype O:6 (strain 81116 / NCTC 11828).